The primary structure comprises 318 residues: NADH-ubiquinone oxidoreductase chain 1 (318 aa).

8 consecutive transmembrane segments (helical) span residues 3 to 23, 69 to 89, 102 to 122, 144 to 164, 171 to 191, 222 to 242, 253 to 273, and 294 to 314; these read LINLLAMIVPVLLAVAFLTLL, MLFIIAPTLALTLALTMWTPL, MLFILALSSLAVYTIMWSGWA, VTLAIIILSLLLMNGSFTLLS, YIWLLIPSWPLAMMWFISTLA, LFFLAEYANIIMMNALTIILF, ELYTINFTIKTLLFTAFFLWI, and LPLTLVMCMWHVALPIMLAGI.

The protein belongs to the complex I subunit 1 family. As to quaternary structure, core subunit of respiratory chain NADH dehydrogenase (Complex I) which is composed of 45 different subunits.

Its subcellular location is the mitochondrion inner membrane. The catalysed reaction is a ubiquinone + NADH + 5 H(+)(in) = a ubiquinol + NAD(+) + 4 H(+)(out). Functionally, core subunit of the mitochondrial membrane respiratory chain NADH dehydrogenase (Complex I) which catalyzes electron transfer from NADH through the respiratory chain, using ubiquinone as an electron acceptor. Essential for the catalytic activity and assembly of complex I. The protein is NADH-ubiquinone oxidoreductase chain 1 (MT-ND1) of Murina suilla (Brown tube-nosed bat).